We begin with the raw amino-acid sequence, 232 residues long: UPF0173 metal-dependent hydrolase Msil_0741 (232 aa).

It belongs to the UPF0173 family.

The sequence is that of UPF0173 metal-dependent hydrolase Msil_0741 from Methylocella silvestris (strain DSM 15510 / CIP 108128 / LMG 27833 / NCIMB 13906 / BL2).